A 289-amino-acid chain; its full sequence is Digeranylgeranylglyceryl phosphate synthase (289 aa).

The next 8 helical transmembrane spans lie at 17–37 (CLMA…ILTS), 50–70 (LFSS…GNAI), 106–126 (FALG…IALF), 141–161 (TPLL…LFGA), 163–183 (VFGL…ALAI), 221–241 (LIGF…MLGL), 243–263 (YLYL…QLLA), and 269–289 (KSSK…IAGV).

The protein belongs to the UbiA prenyltransferase family. DGGGP synthase subfamily. Mg(2+) is required as a cofactor.

The protein resides in the cell membrane. It carries out the reaction sn-3-O-(geranylgeranyl)glycerol 1-phosphate + (2E,6E,10E)-geranylgeranyl diphosphate = 2,3-bis-O-(geranylgeranyl)-sn-glycerol 1-phosphate + diphosphate. Its pathway is membrane lipid metabolism; glycerophospholipid metabolism. Its function is as follows. Prenyltransferase that catalyzes the transfer of the geranylgeranyl moiety of geranylgeranyl diphosphate (GGPP) to the C2 hydroxyl of (S)-3-O-geranylgeranylglyceryl phosphate (GGGP). This reaction is the second ether-bond-formation step in the biosynthesis of archaeal membrane lipids. This is Digeranylgeranylglyceryl phosphate synthase from Methanosarcina barkeri (strain Fusaro / DSM 804).